The primary structure comprises 910 residues: DNA mismatch repair protein MutS (910 aa).

Over residues 1–11 the composition is skewed to basic and acidic residues; the sequence is MEAKVEEKEPE. The tract at residues 1–21 is disordered; sequence MEAKVEEKEPEPVENAGPDAP. 658 to 665 contributes to the ATP binding site; it reads GPNMGGKS.

The protein belongs to the DNA mismatch repair MutS family.

In terms of biological role, this protein is involved in the repair of mismatches in DNA. It is possible that it carries out the mismatch recognition step. This protein has a weak ATPase activity. This chain is DNA mismatch repair protein MutS, found in Brucella abortus (strain 2308).